Consider the following 274-residue polypeptide: Thiazole synthase (274 aa).

Catalysis depends on Lys111, which acts as the Schiff-base intermediate with DXP. Residues Gly172, 198–199 (AG), and 220–221 (NS) contribute to the 1-deoxy-D-xylulose 5-phosphate site. The tract at residues 251–274 (RLPERAAASPSSPTTGIIAEAKTK) is disordered.

Belongs to the ThiG family. Homotetramer. Forms heterodimers with either ThiH or ThiS.

Its subcellular location is the cytoplasm. It carries out the reaction [ThiS sulfur-carrier protein]-C-terminal-Gly-aminoethanethioate + 2-iminoacetate + 1-deoxy-D-xylulose 5-phosphate = [ThiS sulfur-carrier protein]-C-terminal Gly-Gly + 2-[(2R,5Z)-2-carboxy-4-methylthiazol-5(2H)-ylidene]ethyl phosphate + 2 H2O + H(+). Its pathway is cofactor biosynthesis; thiamine diphosphate biosynthesis. Its function is as follows. Catalyzes the rearrangement of 1-deoxy-D-xylulose 5-phosphate (DXP) to produce the thiazole phosphate moiety of thiamine. Sulfur is provided by the thiocarboxylate moiety of the carrier protein ThiS. In vitro, sulfur can be provided by H(2)S. This is Thiazole synthase from Prochlorococcus marinus (strain MIT 9313).